Reading from the N-terminus, the 644-residue chain is DNA gyrase subunit B (644 aa).

The Toprim domain occupies 429–543 (CEIFLVEGDS…AGYVYIAQPP (115 aa)). 3 residues coordinate Mg(2+): glutamate 435, aspartate 508, and aspartate 510.

It belongs to the type II topoisomerase GyrB family. In terms of assembly, heterotetramer, composed of two GyrA and two GyrB chains. In the heterotetramer, GyrA contains the active site tyrosine that forms a transient covalent intermediate with DNA, while GyrB binds cofactors and catalyzes ATP hydrolysis. Mg(2+) is required as a cofactor. The cofactor is Mn(2+). Ca(2+) serves as cofactor.

Its subcellular location is the cytoplasm. It catalyses the reaction ATP-dependent breakage, passage and rejoining of double-stranded DNA.. A type II topoisomerase that negatively supercoils closed circular double-stranded (ds) DNA in an ATP-dependent manner to modulate DNA topology and maintain chromosomes in an underwound state. Negative supercoiling favors strand separation, and DNA replication, transcription, recombination and repair, all of which involve strand separation. Also able to catalyze the interconversion of other topological isomers of dsDNA rings, including catenanes and knotted rings. Type II topoisomerases break and join 2 DNA strands simultaneously in an ATP-dependent manner. In Staphylococcus aureus (strain COL), this protein is DNA gyrase subunit B.